The sequence spans 434 residues: MQITLSNTLANDAWGKNAILSFDSNKAMIHLKNNGKTDRTLVQQAARKLRGQGIKEVELVGEKWDLEFCWAFYQGFYTAKQDYAIEFPHLDDEPQDELLARIECGDFVRGIINEPAQSLTPVKLVERAAEFILNQADIYNEKSAVSFKIISGEELEQQGYHGIWTVGKGSANLPAMLQLDFNPTQDSNAPVLACLVGKGITFDSGGYSIKPSDGMSTMRTDMGGAALLTGALGFAIARGLNQRVKLYLCCAENLVSNNAFKLGDIITYKNGVSAEVLNTDAEGRLVLADGLIEADNQNPGFIIDCATLTGAAKSAVGNDYHSVLSMDDELVKNLFQSAQAENEPFWRLPFEDFHRSQINSSFADIANIGSVPVGAGASTATAFLSYFVKNYKQNWLHIDCSATYRKSGSDLWSVGATGIGVQTLANLMLSRSLK.

The Mn(2+) site is built by K198 and D203. Residue K210 is part of the active site. Mn(2+) contacts are provided by D221, D280, and E282. Residue R284 is part of the active site.

The protein belongs to the peptidase M17 family. As to quaternary structure, homohexamer. Mn(2+) serves as cofactor.

The protein resides in the cytoplasm. It carries out the reaction Release of an N-terminal amino acid, Xaa, from a peptide or arylamide. Xaa is preferably Glu or Asp but may be other amino acids, including Leu, Met, His, Cys and Gln.. In terms of biological role, probably plays an important role in intracellular peptide degradation. The sequence is that of Putative peptidase B from Haemophilus influenzae (strain ATCC 51907 / DSM 11121 / KW20 / Rd).